We begin with the raw amino-acid sequence, 85 residues long: UPF0291 protein SP_1473 (85 aa).

The disordered stretch occupies residues 62 to 85 (TPEKLRQVQREKGLHGRSLDDPNS).

This sequence belongs to the UPF0291 family.

The protein localises to the cytoplasm. In Streptococcus pneumoniae serotype 4 (strain ATCC BAA-334 / TIGR4), this protein is UPF0291 protein SP_1473.